The sequence spans 131 residues: Large-conductance mechanosensitive channel (131 aa).

3 consecutive transmembrane segments (helical) span residues 8 to 28, 30 to 50, and 67 to 87; these read FAVR…GAFG, IVSS…LGGI, and GAFL…FLFV.

It belongs to the MscL family. Homopentamer.

The protein resides in the cell membrane. In terms of biological role, channel that opens in response to stretch forces in the membrane lipid bilayer. May participate in the regulation of osmotic pressure changes within the cell. The chain is Large-conductance mechanosensitive channel from Anoxybacillus flavithermus (strain DSM 21510 / WK1).